The primary structure comprises 108 residues: U-scoloptoxin(16)-Sm1a (108 aa).

The first 19 residues, 1 to 19, serve as a signal peptide directing secretion; the sequence is MNLFLVLFVFSFSVSQFFA.

The protein belongs to the scoloptoxin-16 family. In terms of processing, contains 4 disulfide bonds. Expressed by the venom gland.

It is found in the secreted. In Scolopendra morsitans (Tanzanian blue ringleg centipede), this protein is U-scoloptoxin(16)-Sm1a.